A 406-amino-acid chain; its full sequence is Exodeoxyribonuclease 7 large subunit (406 aa).

The protein belongs to the XseA family. As to quaternary structure, heterooligomer composed of large and small subunits.

The protein localises to the cytoplasm. The catalysed reaction is Exonucleolytic cleavage in either 5'- to 3'- or 3'- to 5'-direction to yield nucleoside 5'-phosphates.. Bidirectionally degrades single-stranded DNA into large acid-insoluble oligonucleotides, which are then degraded further into small acid-soluble oligonucleotides. This is Exodeoxyribonuclease 7 large subunit from Thermobifida fusca (strain YX).